Reading from the N-terminus, the 716-residue chain is MAQNSPQLDIQVLHDLRQRFPEIPEGVVSQCMLQNNNNLEACCRALSQESSKYLYMEYHSPEDNRMNRNRLLHINLGIHSPSSYHPGDGAHLNGGRTLVHSSSDGHIDPQHTAGKQLICLVQEPHSAPAVVAATPNYNPFFMNEQNRSAATPPSQPPQQPSSMQTGMNPSAMQGPSPPPPPPSYMHIPRYSTNPITVTVSQNLPSGQTVPRALQILPQIPSNLYGSPGSIFIRQTSQSSSGRQTPQNAPWQSSPQGPVPHYSQRPLPVYPHQQNYQPSQYSPKQQQIPQSVYHSPPPSQCPSPFSSPQHQVQPPQLGHPSSHVFMPPSPSTTPPHLYQQGPPSYQKPGSHSVAYLPYTASSLPKGSMKKIEITVEPSQRPGTAITRSPSPISNQPSPRNQHSLYTATTPPSSSPSRGISSQPKPPFSVNPVYITYTQPTGPSCAPSPSPRVIPNPTTVFKITVGRATTENLLNLVDQEERSAAPEPIQPISVIPGSGGEKGNHKYQRSSSSGSDDYAYTQALLLHQRARMERLAKQLKLEKEELERLKAEVNSMEHDLMQRRLRRVSCTTAIPTPEEMTRLRSTNRQLQINVDCTLKEVDLLQSRGNFDPKAINNFYDHIEPGPVVPPKPSKKDSSDSCAIERKARRISVTSKAPVDIHDAQAAAADEHLSICKQSARTQPRDEDYEGAPWNCDSCTFLNHPALNRCEQCEMPRYT.

Alanine 2 is modified (N-acetylalanine). The 44-residue stretch at 8–51 folds into the CUE domain; that stretch reads LDIQVLHDLRQRFPEIPEGVVSQCMLQNNNNLEACCRALSQESS. A phosphoserine mark is found at serine 60, serine 101, and serine 103. Disordered stretches follow at residues 141 to 189, 227 to 349, 373 to 433, and 479 to 513; these read FMNE…HIPR, PGSI…KPGS, TVEP…PVYI, and ERSA…SSGS. Over residues 163–173 the composition is skewed to polar residues; that stretch reads MQTGMNPSAMQ. Composition is skewed to low complexity over residues 233 to 246 and 269 to 290; these read RQTS…QTPQ and YPHQ…IPQS. A compositionally biased stretch (polar residues) spans 375-408; sequence EPSQRPGTAITRSPSPISNQPSPRNQHSLYTATT. Phosphoserine is present on serine 389. Threonine 408 is modified (phosphothreonine). Low complexity predominate over residues 409 to 421; that stretch reads PPSSSPSRGISSQ. Phosphoserine occurs at positions 413 and 496. Serine 510 bears the Phosphoserine; by MAPKAPK2 and MAPKAPK3 mark. Residues 521 to 564 are a coiled coil; sequence ALLLHQRARMERLAKQLKLEKEELERLKAEVNSMEHDLMQRRLR. The RanBP2-type zinc-finger motif lies at 686–716; it reads YEGAPWNCDSCTFLNHPALNRCEQCEMPRYT.

Interacts with TAB1, TAB2, MAP3K7, TRAF2 and TRAF6. The minimal TAB3-containing complex (TAB1-MAP3K7-TAB3) appears not to contain TAB2. However, it seems sensible to consider that TAB2 may also join this complex and may act in a cooperative manner with TAB3. Interacts with DYNC2I2 (via the WD domains). Interacts with RBCK1. Binds 'Lys-63'-linked polyubiquitin chains. Interacts with TRIM5. Interacts with TRIM38 (via B30.2/SPRY domain), leading to its translocation to lysosomes and degradation. Interacts with ASB1. Ubiquitinated; following IL1 stimulation or TRAF6 overexpression. Ubiquitinated by AMFR via 'Lys-27'-linked polyubiquitination; leading to TAK1/MAP3K7 activation. Post-translationally, degraded in a lysosome-dependent manner following interaction with TRIM38. In terms of processing, phosphorylated at Ser-510 by MAPKAPK2 and MAPKAPK3 following IL1 treatment.

Functionally, adapter required to activate the JNK and NF-kappa-B signaling pathways through the specific recognition of 'Lys-63'-linked polyubiquitin chains by its RanBP2-type zinc finger (NZF). Acts as an adapter linking MAP3K7/TAK1 and TRAF6 to 'Lys-63'-linked polyubiquitin chains. The RanBP2-type zinc finger (NZF) specifically recognizes Lys-63'-linked polyubiquitin chains unanchored or anchored to the substrate proteins such as RIPK1/RIP1 and RIPK2: this acts as a scaffold to organize a large signaling complex to promote autophosphorylation of MAP3K7/TAK1, and subsequent activation of I-kappa-B-kinase (IKK) core complex by MAP3K7/TAK1. The polypeptide is TGF-beta-activated kinase 1 and MAP3K7-binding protein 3 (Tab3) (Mus musculus (Mouse)).